The chain runs to 357 residues: Holliday junction branch migration complex subunit RuvB (357 aa).

Residues 1-10 (MAIQSDSLSS) are compositionally biased toward polar residues. The disordered stretch occupies residues 1-30 (MAIQSDSLSSRPDAPRLVAPAPASPNEESI). Residues 5 to 195 (SDSLSSRPDA…FGIVSRLEFY (191 aa)) form a large ATPase domain (RuvB-L) region. Residues L34, R35, G76, K79, T80, T81, 142 to 144 (EDF), R185, Y195, and R232 each bind ATP. T80 is a Mg(2+) binding site. Residues 196-266 (NTDDLAHIVT…AANQALAMLE (71 aa)) form a small ATPAse domain (RuvB-S) region. Positions 269 to 357 (PQGLDLMDRK…QPSSGDLFGA (89 aa)) are head domain (RuvB-H). DNA contacts are provided by R305, R324, and R329.

This sequence belongs to the RuvB family. Homohexamer. Forms an RuvA(8)-RuvB(12)-Holliday junction (HJ) complex. HJ DNA is sandwiched between 2 RuvA tetramers; dsDNA enters through RuvA and exits via RuvB. An RuvB hexamer assembles on each DNA strand where it exits the tetramer. Each RuvB hexamer is contacted by two RuvA subunits (via domain III) on 2 adjacent RuvB subunits; this complex drives branch migration. In the full resolvosome a probable DNA-RuvA(4)-RuvB(12)-RuvC(2) complex forms which resolves the HJ.

The protein localises to the cytoplasm. It catalyses the reaction ATP + H2O = ADP + phosphate + H(+). The RuvA-RuvB-RuvC complex processes Holliday junction (HJ) DNA during genetic recombination and DNA repair, while the RuvA-RuvB complex plays an important role in the rescue of blocked DNA replication forks via replication fork reversal (RFR). RuvA specifically binds to HJ cruciform DNA, conferring on it an open structure. The RuvB hexamer acts as an ATP-dependent pump, pulling dsDNA into and through the RuvAB complex. RuvB forms 2 homohexamers on either side of HJ DNA bound by 1 or 2 RuvA tetramers; 4 subunits per hexamer contact DNA at a time. Coordinated motions by a converter formed by DNA-disengaged RuvB subunits stimulates ATP hydrolysis and nucleotide exchange. Immobilization of the converter enables RuvB to convert the ATP-contained energy into a lever motion, pulling 2 nucleotides of DNA out of the RuvA tetramer per ATP hydrolyzed, thus driving DNA branch migration. The RuvB motors rotate together with the DNA substrate, which together with the progressing nucleotide cycle form the mechanistic basis for DNA recombination by continuous HJ branch migration. Branch migration allows RuvC to scan DNA until it finds its consensus sequence, where it cleaves and resolves cruciform DNA. The polypeptide is Holliday junction branch migration complex subunit RuvB (Bordetella avium (strain 197N)).